The sequence spans 112 residues: FK506-binding protein 1A (112 aa).

Positions 20–108 (GDFVTIHYTG…IFEVELLGIN (89 aa)) constitute a PPIase FKBP-type domain.

It belongs to the FKBP-type PPIase family. FKBP1 subfamily.

Its subcellular location is the cytoplasm. It catalyses the reaction [protein]-peptidylproline (omega=180) = [protein]-peptidylproline (omega=0). With respect to regulation, inhibited by both FK506 and rapamycin. Its function is as follows. PPIases accelerate the folding of proteins. It catalyzes the cis-trans isomerization of proline imidic peptide bonds in oligopeptides. The protein is FK506-binding protein 1A (fpr1A) of Aspergillus fumigatus (strain ATCC MYA-4609 / CBS 101355 / FGSC A1100 / Af293) (Neosartorya fumigata).